The primary structure comprises 493 residues: Tripartite motif-containing protein 5 (493 aa).

A2 is subject to N-acetylalanine. An RING-type zinc finger spans residues C15 to R59. S86 is modified (phosphoserine). Residues Q90–E132 form a B box-type zinc finger. Zn(2+) is bound by residues C95, H98, C117, and H123. The stretch at T131–Q223 forms a coiled coil. The tract at residues F185–N198 is required for interaction with GABARAP and for autophagy. In terms of domain architecture, B30.2/SPRY spans L281–S493.

Belongs to the TRIM/RBCC family. In terms of assembly, can form homodimers and homotrimers. In addition to lower-order dimerization, also exhibits a higher-order multimerization and both low- and high-order multimerizations are essential for its restriction activity. Interacts with BTBD1 and BTBD2. Interacts with PSMC4, PSMC5, PSMD7 and HSPA8/HSC70. Interacts (via B30.2/SPRY domain) with HSPA1A/B. Interacts with PSMC2, MAP3K7/TAK1, TAB2 and TAB3. Interacts with SQSTM1. Interacts with TRIM6 and TRIM34. Interacts with ULK1 (phosphorylated form), GABARAP, GABARAPL1, GABARAPL2, MAP1LC3A, MAP1LC3C and BECN1. Degraded in a proteasome-independent fashion in the absence of viral infection but in a proteasome-dependent fashion following exposure to restriction sensitive virus. Post-translationally, autoubiquitinated in a RING finger- and UBE2D2-dependent manner. Monoubiquitinated by TRIM21. Deubiquitinated by Yersinia YopJ. Ubiquitination may not lead to proteasomal degradation.

It localises to the cytoplasm. It is found in the nucleus. The enzyme catalyses S-ubiquitinyl-[E2 ubiquitin-conjugating enzyme]-L-cysteine + [acceptor protein]-L-lysine = [E2 ubiquitin-conjugating enzyme]-L-cysteine + N(6)-ubiquitinyl-[acceptor protein]-L-lysine.. It participates in protein modification; protein ubiquitination. Its function is as follows. Capsid-specific restriction factor that prevents infection from non-host-adapted retroviruses. Blocks viral replication early in the life cycle, after viral entry but before reverse transcription. In addition to acting as a capsid-specific restriction factor, also acts as a pattern recognition receptor that activates innate immune signaling in response to the retroviral capsid lattice. Binding to the viral capsid triggers its E3 ubiquitin ligase activity, and in concert with the heterodimeric ubiquitin conjugating enzyme complex UBE2V1-UBE2N (also known as UBC13-UEV1A complex) generates 'Lys-63'-linked polyubiquitin chains, which in turn are catalysts in the autophosphorylation of the MAP3K7/TAK1 complex (includes TAK1, TAB2, and TAB3). Activation of the MAP3K7/TAK1 complex by autophosphorylation results in the induction and expression of NF-kappa-B and MAPK-responsive inflammatory genes, thereby leading to an innate immune response in the infected cell. Plays a role in regulating autophagy through activation of autophagy regulator BECN1 by causing its dissociation from its inhibitors BCL2 and TAB2. In Pongo abelii (Sumatran orangutan), this protein is Tripartite motif-containing protein 5 (TRIM5).